Consider the following 98-residue polypeptide: Small ribosomal subunit protein uS19 (98 aa).

Residues 74–98 are disordered; sequence FAPTRNYRGHAGGKSEKGGSAPRKK.

This sequence belongs to the universal ribosomal protein uS19 family.

Its function is as follows. Protein S19 forms a complex with S13 that binds strongly to the 16S ribosomal RNA. The polypeptide is Small ribosomal subunit protein uS19 (Chlorobium chlorochromatii (strain CaD3)).